The primary structure comprises 126 residues: MKANNAEAPDSSNAADTLKWVATFVLLVAAVVGNYLYGELSVVARAAGVIVLIAAALGVAATTTKGKEAIVFARESRMEVRKVVWPTRQETMQTTLIVLAVSIVMALALWGIDGIMVRLVAFATGV.

3 consecutive transmembrane segments (helical) span residues 18–38, 40–60, and 97–117; these read LKWVATFVLLVAAVVGNYLYG, LSVVARAAGVIVLIAAALGVA, and IVLAVSIVMALALWGIDGIMV.

This sequence belongs to the SecE/SEC61-gamma family. Component of the Sec protein translocase complex. Heterotrimer consisting of SecY, SecE and SecG subunits. The heterotrimers can form oligomers, although 1 heterotrimer is thought to be able to translocate proteins. Interacts with the ribosome. Interacts with SecDF, and other proteins may be involved. Interacts with SecA.

It localises to the cell inner membrane. In terms of biological role, essential subunit of the Sec protein translocation channel SecYEG. Clamps together the 2 halves of SecY. May contact the channel plug during translocation. This is Protein translocase subunit SecE from Vibrio cholerae serotype O1 (strain ATCC 39315 / El Tor Inaba N16961).